The primary structure comprises 737 residues: Polyribonucleotide nucleotidyltransferase (737 aa).

Mg(2+)-binding residues include aspartate 489 and aspartate 495. A KH domain is found at 556 to 615 (PKIDTIKIDVDKIKIVIGKGGETIDKIIAETGVKIDIDEEGNVSIYSSDQDAINRAKEII). Residues 625–693 (DEVYRAKVVR…EKGRIDASMK (69 aa)) form the S1 motif domain. The segment at 691 to 737 (SMKALLPRPPKPEHDEKGEKSERPHRPRHQKDYKPKKEFTETPKDSE) is disordered. Basic and acidic residues predominate over residues 700–737 (PKPEHDEKGEKSERPHRPRHQKDYKPKKEFTETPKDSE).

This sequence belongs to the polyribonucleotide nucleotidyltransferase family. It depends on Mg(2+) as a cofactor.

The protein localises to the cytoplasm. It catalyses the reaction RNA(n+1) + phosphate = RNA(n) + a ribonucleoside 5'-diphosphate. Involved in mRNA degradation. Catalyzes the phosphorolysis of single-stranded polyribonucleotides processively in the 3'- to 5'-direction. This is Polyribonucleotide nucleotidyltransferase from Streptococcus pneumoniae serotype 2 (strain D39 / NCTC 7466).